We begin with the raw amino-acid sequence, 227 residues long: A-type potassium channel modulatory protein KCNIP1 (227 aa).

Residues 38–94 enclose the EF-hand 1; degenerate domain; sequence LEMTMVCHRPEGLEQLEAQTNFTKRELQVLYRGFKNECPSGVVNEDTFKQIYAQFFP. 3 consecutive EF-hand domains span residues 97–132, 133–168, and 181–216; these read DAST…LLRG, TVHE…IYDM, and TPRQ…DDNI. Ca(2+) contacts are provided by aspartate 146, asparagine 148, aspartate 150, tyrosine 152, glutamate 157, aspartate 194, asparagine 196, aspartate 198, and glutamate 205. Residues 214 to 227 are interaction with KCND2; it reads DNIMRSLQLFQNVM.

Belongs to the recoverin family. Component of heteromultimeric potassium channels. Identified in potassium channel complexes containing KCND1, KCND2, KCND3, KCNIP1, KCNIP2, KCNIP3, KCNIP4, DPP6 and DPP10. Part of a heterooctamer composed of the tetrameric channel and four KCNIP1 chains. Probably part of a complex consisting of KCNIP1, KCNIP2 isoform 3 and KCND2. Self-associates to form homodimers and homotetramers. Interacts with KCNIP2 isoform 3 in a calcium-dependent manner. Interacts with Naja atra venom CTX3. Interacts with KCND2; this interaction mediates the capture of both the N- and C-terminus of KCND2, thus preventing KCND2 N-type inactivation and modulates the channel gating kinetics. Interacts with KCND3; each KCNIP1 monomer interacts with two adjacent KCND3 subunits, through both the N-terminal inactivation ball of a KCND3 subunit and a C-terminal helix from the adjacent KCND3 subunit, clamping them together; this interaction stabilizes the tetrameric form and modulates the channel gating kinetics namely channel activation and inactivation kinetics and rate of recovery from inactivation. As to expression, isoform 1 and isoform 2 are expressed in brain and kidney. Isoform 1 is also expressed in liver, pancreas, skeletal muscle, small intestine and testis. Isoform 2 is also expressed in lung, pancreas, leukocytes, prostate and thymus.

It localises to the cell membrane. The protein localises to the cytoplasm. Its subcellular location is the cell projection. The protein resides in the dendrite. Regulatory subunit of Kv4/D (Shal)-type voltage-gated rapidly inactivating A-type potassium channels. Regulates channel density, inactivation kinetics and rate of recovery from inactivation in a calcium-dependent and isoform-specific manner. In vitro, modulates KCND1/Kv4.1 and KCND2/Kv4.2 currents. Increases the presence of KCND2 at the cell surface. The polypeptide is A-type potassium channel modulatory protein KCNIP1 (Homo sapiens (Human)).